We begin with the raw amino-acid sequence, 498 residues long: Lysine--tRNA ligase (498 aa).

Mg(2+)-binding residues include Glu-409 and Glu-416.

Belongs to the class-II aminoacyl-tRNA synthetase family. Homodimer. The cofactor is Mg(2+).

It localises to the cytoplasm. It carries out the reaction tRNA(Lys) + L-lysine + ATP = L-lysyl-tRNA(Lys) + AMP + diphosphate. The polypeptide is Lysine--tRNA ligase (Coxiella burnetii (strain CbuK_Q154) (Coxiella burnetii (strain Q154))).